The primary structure comprises 264 residues: Thiazole synthase (264 aa).

Lys106 acts as the Schiff-base intermediate with DXP in catalysis. Residues Gly167, 193 to 194 (AG), and 215 to 216 (NT) contribute to the 1-deoxy-D-xylulose 5-phosphate site.

The protein belongs to the ThiG family. As to quaternary structure, homotetramer. Forms heterodimers with either ThiH or ThiS.

The protein resides in the cytoplasm. The enzyme catalyses [ThiS sulfur-carrier protein]-C-terminal-Gly-aminoethanethioate + 2-iminoacetate + 1-deoxy-D-xylulose 5-phosphate = [ThiS sulfur-carrier protein]-C-terminal Gly-Gly + 2-[(2R,5Z)-2-carboxy-4-methylthiazol-5(2H)-ylidene]ethyl phosphate + 2 H2O + H(+). The protein operates within cofactor biosynthesis; thiamine diphosphate biosynthesis. Its function is as follows. Catalyzes the rearrangement of 1-deoxy-D-xylulose 5-phosphate (DXP) to produce the thiazole phosphate moiety of thiamine. Sulfur is provided by the thiocarboxylate moiety of the carrier protein ThiS. In vitro, sulfur can be provided by H(2)S. The protein is Thiazole synthase of Stenotrophomonas maltophilia (strain R551-3).